Reading from the N-terminus, the 104-residue chain is Ribonuclease P protein component 4 (104 aa).

Positions 63, 66, 89, and 92 each coordinate Zn(2+).

The protein belongs to the eukaryotic/archaeal RNase P protein component 4 family. In terms of assembly, consists of a catalytic RNA component and at least 4-5 protein subunits. Zn(2+) serves as cofactor.

Its subcellular location is the cytoplasm. It carries out the reaction Endonucleolytic cleavage of RNA, removing 5'-extranucleotides from tRNA precursor.. Its function is as follows. Part of ribonuclease P, a protein complex that generates mature tRNA molecules by cleaving their 5'-ends. This Methanosphaera stadtmanae (strain ATCC 43021 / DSM 3091 / JCM 11832 / MCB-3) protein is Ribonuclease P protein component 4.